The chain runs to 253 residues: 5'-nucleotidase SurE (253 aa).

Residues Asp-8, Asp-9, Ser-39, and Asn-91 each coordinate a divalent metal cation.

This sequence belongs to the SurE nucleotidase family. A divalent metal cation serves as cofactor.

It is found in the cytoplasm. It catalyses the reaction a ribonucleoside 5'-phosphate + H2O = a ribonucleoside + phosphate. Nucleotidase that shows phosphatase activity on nucleoside 5'-monophosphates. The chain is 5'-nucleotidase SurE from Leptothrix cholodnii (strain ATCC 51168 / LMG 8142 / SP-6) (Leptothrix discophora (strain SP-6)).